A 178-amino-acid chain; its full sequence is Endoribonuclease YbeY (178 aa).

His-118, His-122, and His-128 together coordinate Zn(2+). The interval 156–178 is disordered; it reads YQQDRQDERDRRLLDKSRYFDEP. Positions 159–178 are enriched in basic and acidic residues; that stretch reads DRQDERDRRLLDKSRYFDEP.

The protein belongs to the endoribonuclease YbeY family. Zn(2+) serves as cofactor.

Its subcellular location is the cytoplasm. Its function is as follows. Single strand-specific metallo-endoribonuclease involved in late-stage 70S ribosome quality control and in maturation of the 3' terminus of the 16S rRNA. The polypeptide is Endoribonuclease YbeY (Mycobacterium marinum (strain ATCC BAA-535 / M)).